The chain runs to 118 residues: MKNRYIASFEAAQIAEKQIPQFRSGDTVRIGVEIKEGEKKRIQTFEGIIIGRSGNGVDATFTIRKLGANSIGVERIFPLYSESLKSFEVIRRGRVRRAKLNFLRGLKGKAARIKELKR.

The protein belongs to the bacterial ribosomal protein bL19 family.

Functionally, this protein is located at the 30S-50S ribosomal subunit interface and may play a role in the structure and function of the aminoacyl-tRNA binding site. The chain is Large ribosomal subunit protein bL19 from Aliarcobacter butzleri (strain RM4018) (Arcobacter butzleri).